Reading from the N-terminus, the 251-residue chain is Cytochrome P450 monooxygenase ppzG (251 aa).

Cysteine 250 is a heme binding site.

Belongs to the cytochrome P450 family. Heme is required as a cofactor.

It functions in the pathway secondary metabolite biosynthesis. Cytochrome P450 monooxygenase; part of the gene cluster that mediates the biosynthesis of pyrrolopyrazines, secondary metabolites showing insecticidal activity. The role of ppzG within the pathway has still to be determined. The single multifunctional NRPS ppzA is sufficient to produce peramine via condensation of 1-pyrroline-5-carboxylate and arginine, N-methylation of the alpha-amino group of arginine and reduction of the thioester and the cyclization to form an iminium ion resulting in release from the peptide synthetase. Deprotonation of this intermediate and oxidation of the pyrroline ring would give rise to peramine. In Epichloe species that produce only peramine, the peramine synthetase gene is not localized in a gene cluster, in contrast to Metarhizium species that contain additional pyrrolopyrazine biosynthesis genes. The 2-oxoglutarate-Fe(II) type oxidoreductase ppzC hydroxylates peramine to yield the newly identified compound 8-hydroxyperamine whereas ppzD converts L-proline into trans-4-hydroxy-L-proline, a precursor of peramine biosynthesis. The protein is Cytochrome P450 monooxygenase ppzG of Metarhizium rileyi (strain RCEF 4871) (Nomuraea rileyi).